Consider the following 2470-residue polypeptide: Serine/threonine-protein kinase mTor (2470 aa).

HEAT repeat units follow at residues 172-209 (QHIL…VTAQ), 746-785 (SYMN…VNGG), 791-829 (LWAD…ATGR), 835-873 (HKYP…MDPY), 962-999 (PYLA…FVKL), 1043-1080 (DYLA…FGST), 1083-1122 (YYLP…QLDF), and 1124-1160 (DFSS…QLGK). The FAT domain occupies 1349-1903 (LLGTRAMACR…VYPLTVASKS (555 aa)). TPR repeat units follow at residues 1407–1440 (ANEL…DSSD) and 1718–1751 (MATW…DPNW). The stretch at 1854-1891 (NTWLQVIPQLIARIDTHRQLVGQLIHQLLMDIGKNHPQ) is one HEAT 9 repeat. The PI3K/PI4K catalytic domain maps to 2077–2389 (IKTNLQVITS…SLSNSVEDSL (313 aa)). The segment at 2083–2089 (VITSKQR) is G-loop. The catalytic loop stretch occupies residues 2256-2264 (GLGDRHPSN). Residues 2276–2301 (HIDFGDCFEVAMTREKFPEKIPFRLT) form an activation loop region. The disordered stretch occupies residues 2364–2389 (AGAGAPGGRGGSGMQDSLSNSVEDSL). Over residues 2367–2376 (GAPGGRGGSG) the composition is skewed to gly residues. Residues 2377–2386 (MQDSLSNSVE) show a composition bias toward polar residues. The FATC domain occupies 2438-2470 (KSVNEQSQVELLIQQATNNENLCQCYIGWCPFW).

Belongs to the PI3/PI4-kinase family. As to quaternary structure, may be part of a minimal complex, TORC1, consisting of mTor, raptor and lst8. May be part of a minimal complex, TORC2, consisting of mTor, rictor and lst8. Self-associates; assembles into homomultimeric complexes. Component of a multiprotein complex.

It carries out the reaction L-seryl-[protein] + ATP = O-phospho-L-seryl-[protein] + ADP + H(+). It catalyses the reaction L-threonyl-[protein] + ATP = O-phospho-L-threonyl-[protein] + ADP + H(+). Functionally, promotes cell and tissue growth, maintains tissue homeostatis and controls responses to environmental stress and aging. Regulates growth during animal development by coupling growth factor signaling to nutrient availability. Central regulators of autophagy. May be involved in atg1 phosphorylation. May also be involved, directly or indirectly, in the control of neuronal function. Phosphorylates S6K/p70S6K, in vitro. May regulate the activity of S6K. Overexpression inhibits growth and reduces cell size. Affects the timing of neuronal cell differentiation. Hyperactivation of the signaling leads to accelerated differentiation, whereas inhibition of the signaling retards differentiation. Thus, in addition to controlling growth of the cell in which it resides, it can also influence growth of distant cells and organs during development via a humoral mechanism. As part of the TORC1 complex regulates energy homeostasis and promotes certain aspects of larval growth by negatively regulating REPTOR. REPTOR functions downstream of TORC1 to regulate the expression of stress response genes in response to TORC1 inhibition resulting from nutrient deprivation. When TORC1 activity is high it phosphorylates REPTOR which inhibits its recruitment into the nucleus and antagonizes their function. This function is essential under normal feeding conditions to promote TORC1-dependent growth during larval development and, in adults and larvae to prevent the REPTOR-dependent expression of nutrient stress response genes. In short, during development, it primarily controls growth, whereas in the adult, where there is relatively little growth, it controls aging and other aspects of nutrient-related physiology. Rag GTPases act as activators of TORC1 in response to amino acid signals. This Drosophila melanogaster (Fruit fly) protein is Serine/threonine-protein kinase mTor.